Consider the following 409-residue polypeptide: Outer membrane protein assembly factor BamB (409 aa).

Positions Met1–Gly34 are cleaved as a signal peptide. Residue Cys35 is the site of N-palmitoyl cysteine attachment. The S-diacylglycerol cysteine moiety is linked to residue Cys35.

It belongs to the BamB family. Part of the Bam complex.

It is found in the cell outer membrane. In terms of biological role, part of the outer membrane protein assembly complex, which is involved in assembly and insertion of beta-barrel proteins into the outer membrane. The chain is Outer membrane protein assembly factor BamB from Nitrosomonas eutropha (strain DSM 101675 / C91 / Nm57).